The following is a 357-amino-acid chain: MVDQATLDKLEAGFKKLQDATDCKSLLKKYLNREVFDQCKSLKTALGATLLDCIQSGVENLDSGVGIYAPDAEAYTLFAPIFNPIIEDYHEGFKPTDKHPPTDFGDINTIVNVDPSGKYVVSTHVRCGRSLKGYPFNPCLTEANYKEMEDKVSAIFGTFEGELKGKYYPLTGMDKATQQQLIDDHFLFKEGDRFLQAANACRYWPTGRGIYHNDAKTFLVWVNEEDHLRIISMQKGGDLKTIFQRLVNAVNTIESKLPFSRDDRLGFLTFCPTNLGTTIRASVHIALPKLAKDKKQLEAIAAKFNLQVRGTRGEHTESEGGVYDISNKRRMGLTEYQAVKEMQDGILEMIKMEEAAP.

In terms of domain architecture, Phosphagen kinase N-terminal spans K9 to E91. L-arginine is bound at residue G64–G66. A Phosphagen kinase C-terminal domain is found at Y119 to A356. Residues S122–R126 and H185 each bind ATP. Residue E225 participates in L-arginine binding. R229 contributes to the ATP binding site. Position 271 (C271) interacts with L-arginine. ATP-binding positions include R280 to H284 and R309 to E314.

This sequence belongs to the ATP:guanido phosphotransferase family.

The enzyme catalyses L-arginine + ATP = N(omega)-phospho-L-arginine + ADP + H(+). Its function is as follows. Catalyzes the reversible transfer of high energy ATP gamma-phosphate group to L-arginine. This Polybetes pythagoricus (South American huntsman spider) protein is Arginine kinase.